The primary structure comprises 397 residues: MAPSPAAAMPLAAEPDEVVVEVEEEEERGVKGGGGVAGLDEVEGLVVGSYCHDVLLRGGRVVGETLGGAAAFVSNVLDAASPAGASLAVVSKVGHDFAYATAAAPARHPPVLCASPTTSFHARFSDDAASAHAPDRQLRRVHACDPIYPADLPDRRFAYGLAVGVAGEVLPETLERMIRLCRAVLVDAQALIRAFDGEAKGGGAVRHVALEATPYARLLPRVAFLKASSEEAPYVGVETARRRCCVIVTEGRDGCRLYWDGGEARVAPFPAVQVDPTGAGDSFLAGFASGLLWGLSATDAALLGNFFGAAAVSQVGVPTFDPKMLQAVKQILEKAVKRPCTHINGNTFTFQRSSMHDELHKSLQEAAMLVCEQKQANSPATDNGDVCSINELTSLPS.

Residues serine 228, glycine 278–aspartate 281, and asparagine 305 each bind ATP. Catalysis depends on aspartate 281, which acts as the Proton acceptor.

The protein belongs to the carbohydrate kinase pfkB family. In terms of tissue distribution, expressed in roots, leaf blade shoots, leaf sheath shoots and panicles.

The catalysed reaction is myo-inositol + ATP = 1D-myo-inositol 3-phosphate + ADP + H(+). In terms of biological role, kinase that phosphorylates myo-inositol to produce multiple myo-inositol monophosphates. Participates in phytic acid biosynthesis in developing seeds. Phytic acid is the primary storage form of phosphorus in cereal grains and other plant seeds. In Oryza sativa subsp. japonica (Rice), this protein is Inositol 3-kinase.